A 465-amino-acid chain; its full sequence is Ribulose bisphosphate carboxylase large chain (465 aa).

An N6,N6,N6-trimethyllysine modification is found at Lys-4. Substrate is bound by residues Asn-113 and Thr-163. Lys-165 acts as the Proton acceptor in catalysis. Lys-167 serves as a coordination point for substrate. Positions 191, 193, and 194 each coordinate Mg(2+). Lys-191 bears the N6-carboxylysine mark. Residue His-284 is the Proton acceptor of the active site. Positions 285, 317, and 369 each coordinate substrate.

It belongs to the RuBisCO large chain family. Type I subfamily. As to quaternary structure, heterohexadecamer of 8 large chains and 8 small chains; disulfide-linked. The disulfide link is formed within the large subunit homodimers. Requires Mg(2+) as cofactor. In terms of processing, the disulfide bond which can form in the large chain dimeric partners within the hexadecamer appears to be associated with oxidative stress and protein turnover.

Its subcellular location is the plastid. The protein localises to the chloroplast. The enzyme catalyses 2 (2R)-3-phosphoglycerate + 2 H(+) = D-ribulose 1,5-bisphosphate + CO2 + H2O. It carries out the reaction D-ribulose 1,5-bisphosphate + O2 = 2-phosphoglycolate + (2R)-3-phosphoglycerate + 2 H(+). Its function is as follows. RuBisCO catalyzes two reactions: the carboxylation of D-ribulose 1,5-bisphosphate, the primary event in carbon dioxide fixation, as well as the oxidative fragmentation of the pentose substrate in the photorespiration process. Both reactions occur simultaneously and in competition at the same active site. The protein is Ribulose bisphosphate carboxylase large chain of Fragaria ananassa (Strawberry).